Consider the following 375-residue polypeptide: Protein DEK (375 aa).

The disordered stretch occupies residues 1-61; sequence MSASAPAAEG…LIVEGKREKK (61 aa). At S2 the chain carries N-acetylserine. Phosphothreonine is present on residues T13 and T15. Position 19 is a phosphoserine (S19). The span at 19–30 shows a compositional bias: basic and acidic residues; the sequence is SEKEPEMPGPRE. A compositionally biased stretch (acidic residues) spans 31–47; that stretch reads ESEEEEDEDDEEEEEEE. S32 bears the Phosphoserine; by CK2 mark. Residues 48–61 show a composition bias toward basic and acidic residues; it reads KEKSLIVEGKREKK. S51, S72, S121, and S122 each carry phosphoserine. Residues 149–183 enclose the SAP domain; that stretch reads LKKFRNAMLKSICEVLDLERSGVNSELVKRILNFL. A Phosphoserine; by CK2 modification is found at S159. The segment at 184 to 325 is disordered; that stretch reads MHPKPSGKPL…LKKPPTDEEL (142 aa). The span at 194–203 shows a compositional bias: basic residues; the sequence is PKSKKTCSKG. Phosphothreonine; by CK2 is present on T199. 2 positions are modified to phosphoserine; by CK2: S201 and S204. The Nuclear localization signal motif lies at 205 to 221; the sequence is KKERNSSGMARKAKRTK. S210, S227, S230, S231, and S232 each carry phosphoserine. Phosphoserine; by CK2 is present on residues S243, S244, and S251. The segment covering 243-253 has biased composition (acidic residues); sequence SSDDEDKESEE. Basic residues predominate over residues 258–277; the sequence is KTAKREKPKQKATSKSKKSV. Low complexity predominate over residues 278–296; sequence KSANVKKADSSTTKKNQNS. The residue at position 279 (S279) is an ADP-ribosylserine. A phosphoserine; by CK2 mark is found at S287 and S288. T289 and T290 each carry phosphothreonine; by CK2. 5 positions are modified to phosphoserine; by CK2: S296, S301, S303, S306, and S307. A DEK-C domain is found at 319 to 375; it reads PPTDEELKETIKKLLASANLEEVTMKQICKKVYENYPTYDLTERKDFIKTTVKELIS. 2 DNA-binding regions span residues 337-351 and 367-371; these read NLEE…KKVY and KTTVK.

In terms of assembly, found in a mRNA splicing-dependent exon junction complex (EJC) with DEK, RBM8A, RNPS1, SRRM1 and ALYREF/THOC4. Interacts with histones H2A, H2B, H3, H4, acetylated histone H4, non-phosphorylated DAXX and HDAC2. Component of the B-WICH complex, at least composed of SMARCA5/SNF2H, BAZ1B/WSTF, SF3B1, DEK, MYO1C, ERCC6, MYBBP1A and DDX21. Binds DNA. Phosphorylated by CK2. Phosphorylation fluctuates during the cell cycle with a moderate peak during G(1) phase, and weakens the binding of DEK to DNA. Ubiquitous. Expressed at relatively high levels.

It is found in the nucleus. In terms of biological role, involved in chromatin organization. The chain is Protein DEK (DEK) from Homo sapiens (Human).